Reading from the N-terminus, the 195-residue chain is Peptidyl-tRNA hydrolase (195 aa).

Position 17 (Y17) interacts with tRNA. Residue H22 is the Proton acceptor of the active site. Residues Y68, N70, and N116 each coordinate tRNA.

Belongs to the PTH family. As to quaternary structure, monomer.

It is found in the cytoplasm. The catalysed reaction is an N-acyl-L-alpha-aminoacyl-tRNA + H2O = an N-acyl-L-amino acid + a tRNA + H(+). Its function is as follows. Hydrolyzes ribosome-free peptidyl-tRNAs (with 1 or more amino acids incorporated), which drop off the ribosome during protein synthesis, or as a result of ribosome stalling. In terms of biological role, catalyzes the release of premature peptidyl moieties from peptidyl-tRNA molecules trapped in stalled 50S ribosomal subunits, and thus maintains levels of free tRNAs and 50S ribosomes. The protein is Peptidyl-tRNA hydrolase of Shewanella oneidensis (strain ATCC 700550 / JCM 31522 / CIP 106686 / LMG 19005 / NCIMB 14063 / MR-1).